Reading from the N-terminus, the 1305-residue chain is Adenylate cyclase type 9 (1305 aa).

At 1–110 (MASPVNQQLL…CFPQTQRRFR (110 aa)) the chain is on the cytoplasmic side. Residues 46 to 55 (ISSSCSSGES) show a composition bias toward low complexity. The tract at residues 46-71 (ISSSCSSGESGVKKTGGSGGARRQKK) is disordered. A helical membrane pass occupies residues 111-131 (YALMYLSVAGLLWSIYFSVHM). The Extracellular segment spans residues 132-134 (KTK). A helical membrane pass occupies residues 135–155 (LVSHLVPTLCFLIVCLGFFFF). Over 156–164 (TFTKSYARH) the chain is Cytoplasmic. A helical transmembrane segment spans residues 165-185 (CTAISLLVTLLVFTLTLASQF). The Extracellular portion of the chain corresponds to 186-209 (QVLNPGLGSDSLSNLTSFSATGSS). A glycan (N-linked (GlcNAc...) asparagine) is linked at Asn199. Residues 210-229 (SCLSQVGSFSICVEVLLLLY) form a helical membrane-spanning segment. Residues 230 to 235 (TVMHLP) are Cytoplasmic-facing. A helical transmembrane segment spans residues 236–253 (LYLSACLGVAYSILFETF). The Extracellular segment spans residues 254 to 274 (GYHFRDESCFVLLVGRMAHWE). Residues 275–295 (LLSKALLHVCIHAIGVHLFIM) traverse the membrane as a helical segment. The Cytoplasmic portion of the chain corresponds to 296–778 (SEVRSRSTFL…VKTFASATFS (483 aa)). The segment at 343 to 369 (QGDDESENSVKRHSASSPKSRKKKSSI) is disordered. Positions 353 to 368 (KRHSASSPKSRKKKSS) are enriched in basic residues. Asp393, Ile394, and Asp437 together coordinate Mg(2+). ATP contacts are provided by residues 393–398 (DIVGFT), 435–437 (LGD), and Arg481. 2 stretches are compositionally biased toward polar residues: residues 607–618 (SDSHTNCTQPET) and 670–680 (ESSTGDTLTNS). The segment at 607 to 680 (SDSHTNCTQP…SSTGDTLTNS (74 aa)) is disordered. A helical membrane pass occupies residues 779-799 (SLQDVLLNYFIFVLLSVACLL). Over 800 to 810 (KPGTNTVSPPT) the chain is Extracellular. The helical transmembrane segment at 811–831 (LALVLLSVCGLLGFLSLLVSV) threads the bilayer. Residues 832–859 (RMAFYLEDMLLCTRRLLEIISGWVPRHF) lie on the Cytoplasmic side of the membrane. The helical transmembrane segment at 860–880 (IGTVLVCLPAAVIFSYLSSDF) threads the bilayer. At 881-883 (YTD) the chain is on the extracellular side. Residues 884–904 (IHYTMFLCSALLIPMVQYCNF) traverse the membrane as a helical segment. The Cytoplasmic portion of the chain corresponds to 905–911 (CQLSSSA). The chain crosses the membrane as a helical span at residues 912–932 (LLLATITGATMLILIYLPLCP). Residues 933 to 966 (QRPPLDPGTDIEANLSTSNSSYETLDNPRTELPF) lie on the Extracellular side of the membrane. Asn946 and Asn951 each carry an N-linked (GlcNAc...) asparagine glycan. The chain crosses the membrane as a helical span at residues 967-987 (TRLGQEIAVAYFLLLLLVWFL). Residues 988–1305 (NREFDVSYRL…EERGRDGGAR (318 aa)) are Cytoplasmic-facing. Residues Lys1099, 1176 to 1178 (DIW), 1183 to 1187 (NIASR), and Lys1223 contribute to the ATP site. The segment at 1261–1305 (SIGRSPTDEISSLVTGGKGAVELGSGEAERKREKAEERGRDGGAR) is disordered. Basic and acidic residues predominate over residues 1287–1305 (EAERKREKAEERGRDGGAR).

It belongs to the adenylyl cyclase class-4/guanylyl cyclase family. Mg(2+) serves as cofactor. It depends on Mn(2+) as a cofactor. As to expression, detected in oocytes.

It localises to the cell membrane. The enzyme catalyses ATP = 3',5'-cyclic AMP + diphosphate. Functionally, adenylyl cyclase that catalyzes the formation of the signaling molecule cAMP in response to activation of G protein-coupled receptors. The chain is Adenylate cyclase type 9 (adcy9) from Xenopus laevis (African clawed frog).